We begin with the raw amino-acid sequence, 324 residues long: Acetyl-coenzyme A carboxylase carboxyl transferase subunit alpha (324 aa).

A CoA carboxyltransferase C-terminal domain is found at 37–291 (KLDKRLDRLK…QEYVLQEWLK (255 aa)).

It belongs to the AccA family. In terms of assembly, acetyl-CoA carboxylase is a heterohexamer composed of biotin carboxyl carrier protein (AccB), biotin carboxylase (AccC) and two subunits each of ACCase subunit alpha (AccA) and ACCase subunit beta (AccD).

The protein resides in the cytoplasm. The catalysed reaction is N(6)-carboxybiotinyl-L-lysyl-[protein] + acetyl-CoA = N(6)-biotinyl-L-lysyl-[protein] + malonyl-CoA. It participates in lipid metabolism; malonyl-CoA biosynthesis; malonyl-CoA from acetyl-CoA: step 1/1. In terms of biological role, component of the acetyl coenzyme A carboxylase (ACC) complex. First, biotin carboxylase catalyzes the carboxylation of biotin on its carrier protein (BCCP) and then the CO(2) group is transferred by the carboxyltransferase to acetyl-CoA to form malonyl-CoA. The sequence is that of Acetyl-coenzyme A carboxylase carboxyl transferase subunit alpha from Chlamydia trachomatis serovar D (strain ATCC VR-885 / DSM 19411 / UW-3/Cx).